An 80-amino-acid polypeptide reads, in one-letter code: uncharacterized protein (80 aa).

Residues 12-32 (FKIIALILLIVLIINLSYKLF) form a helical membrane-spanning segment.

Its subcellular location is the membrane. This is an uncharacterized protein from Saccharomyces cerevisiae (strain ATCC 204508 / S288c) (Baker's yeast).